We begin with the raw amino-acid sequence, 142 residues long: Hemoglobin subunit alpha-C (142 aa).

Alanine 2 carries the N-acetylalanine modification. Residues 2 to 142 (ALNCDDKAHI…VSGLLTSKYR (141 aa)) form the Globin domain. An O2-binding site is contributed by histidine 59. Histidine 88 contributes to the heme b binding site.

It belongs to the globin family. Heterotetramer of either two alpha-B chains or two alpha-C chains and two beta chains. The two major hemoglobins, B and C, associate upon deoxygenation to form a trimer of tetramers, BC2, that has a much lower affinity for oxygen than either component alone. In terms of tissue distribution, red blood cells.

Its function is as follows. The alpha-C chain is a component of adult hemoglobin C. This chain is Hemoglobin subunit alpha-C, found in Aquarana catesbeiana (American bullfrog).